Reading from the N-terminus, the 276-residue chain is Large ribosomal subunit protein uL2 (276 aa).

A disordered region spans residues 224 to 265 (VMNPVDHPHGGGEGRTASGRHPVSPWGLPTKGYKTRNNKRTD).

Belongs to the universal ribosomal protein uL2 family. As to quaternary structure, part of the 50S ribosomal subunit. Forms a bridge to the 30S subunit in the 70S ribosome.

Functionally, one of the primary rRNA binding proteins. Required for association of the 30S and 50S subunits to form the 70S ribosome, for tRNA binding and peptide bond formation. It has been suggested to have peptidyltransferase activity; this is somewhat controversial. Makes several contacts with the 16S rRNA in the 70S ribosome. This chain is Large ribosomal subunit protein uL2, found in Dichelobacter nodosus (strain VCS1703A).